The following is a 685-amino-acid chain: uncharacterized protein (685 aa).

Disordered regions lie at residues 502–538 and 635–685; these read NLNQ…SLNK and RSKR…IHNA. The segment covering 518 to 538 has biased composition (polar residues); the sequence is SSENMTKFPSSRGKSTVSLNK. Over residues 675–685 the composition is skewed to basic residues; sequence KLKKSLIIHNA.

This is an uncharacterized protein from Homo sapiens (Human).